Reading from the N-terminus, the 160-residue chain is UPF0262 protein Oant_0325 (160 aa).

This sequence belongs to the UPF0262 family.

The chain is UPF0262 protein Oant_0325 from Brucella anthropi (strain ATCC 49188 / DSM 6882 / CCUG 24695 / JCM 21032 / LMG 3331 / NBRC 15819 / NCTC 12168 / Alc 37) (Ochrobactrum anthropi).